The following is a 1016-amino-acid chain: Protein kinase C-like 2 (1016 aa).

Residues 1–68 (MDMIDEAITE…LEKLKLRKNG (68 aa)) form the REM-1 1 domain. Residues 68–101 (GVRKSNSEKPSVGIEKNPSFSTTKSAKSFSSTSS) form a disordered region. Residues 86–101 (SFSTTKSAKSFSSTSS) show a composition bias toward low complexity. The REM-1 2 domain occupies 111 to 188 (NYDTPLTISK…LKRYHDLHIE (78 aa)). The C2 domain maps to 195–307 (PSTESRGNLN…VEKQRRKKVE (113 aa)). 2 Phorbol-ester/DAG-type zinc fingers span residues 405 to 453 (GHKF…VTKC) and 473 to 523 (PHHF…PDFC). The segment at 543–602 (YKAQQHKQKSSHHKHHHHKKSKSSSSKHKENDKASVSITTTTTPSITPADPVPTSPKPLA) is disordered. The segment covering 546–568 (QQHKQKSSHHKHHHHKKSKSSSS) has biased composition (basic residues). Over residues 579-590 (SITTTTTPSITP) the composition is skewed to low complexity. Positions 683–942 (FTFLSVLGKG…AEDVMTHPFF (260 aa)) constitute a Protein kinase domain. Residues 689 to 697 (LGKGNFGKV) and K712 contribute to the ATP site. D808 serves as the catalytic Proton acceptor. An AGC-kinase C-terminal domain is found at 943–1013 (SNINWDDIYH…SCEDDKPSTT (71 aa)). Position 984 is a phosphothreonine (T984).

Belongs to the protein kinase superfamily. AGC Ser/Thr protein kinase family. PKC subfamily. Interacts with rho2.

The catalysed reaction is L-seryl-[protein] + ATP = O-phospho-L-seryl-[protein] + ADP + H(+). The enzyme catalyses L-threonyl-[protein] + ATP = O-phospho-L-threonyl-[protein] + ADP + H(+). Functionally, involved in the control of the cell shape. Target of the inhibitor staurosporine. In Schizosaccharomyces pombe (strain 972 / ATCC 24843) (Fission yeast), this protein is Protein kinase C-like 2 (pck2).